Consider the following 121-residue polypeptide: Large ribosomal subunit protein bL20 (121 aa).

Belongs to the bacterial ribosomal protein bL20 family.

In terms of biological role, binds directly to 23S ribosomal RNA and is necessary for the in vitro assembly process of the 50S ribosomal subunit. It is not involved in the protein synthesizing functions of that subunit. This is Large ribosomal subunit protein bL20 from Methylorubrum extorquens (strain PA1) (Methylobacterium extorquens).